We begin with the raw amino-acid sequence, 187 residues long: Adenylate kinase (187 aa).

An ATP-binding site is contributed by 11–16; it reads GAGKGT. An NMP region spans residues 31–60; that stretch reads STGDILREAVKNQTAMGIEAKRYMDAGDLV. Residues Thr-32, Arg-37, 58 to 60, 86 to 89, and Gln-93 each bind AMP; these read DLV and GFPR. Residues 127 to 137 are LID; it reads GRAEIEGRADD. Arg-128 contacts ATP. Arg-134 and Arg-145 together coordinate AMP. Residue Gly-173 coordinates ATP.

Belongs to the adenylate kinase family. Monomer.

It localises to the cytoplasm. It carries out the reaction AMP + ATP = 2 ADP. It functions in the pathway purine metabolism; AMP biosynthesis via salvage pathway; AMP from ADP: step 1/1. Its function is as follows. Catalyzes the reversible transfer of the terminal phosphate group between ATP and AMP. Plays an important role in cellular energy homeostasis and in adenine nucleotide metabolism. The polypeptide is Adenylate kinase (Leptospira interrogans serogroup Icterohaemorrhagiae serovar copenhageni (strain Fiocruz L1-130)).